Consider the following 425-residue polypeptide: Glutamyl-tRNA reductase (425 aa).

Substrate is bound by residues T49–R52, S106, E111–Q113, and Q117. The active-site Nucleophile is C50. NADP(+) is bound at residue G186–I191.

This sequence belongs to the glutamyl-tRNA reductase family. In terms of assembly, homodimer.

The catalysed reaction is (S)-4-amino-5-oxopentanoate + tRNA(Glu) + NADP(+) = L-glutamyl-tRNA(Glu) + NADPH + H(+). The protein operates within porphyrin-containing compound metabolism; protoporphyrin-IX biosynthesis; 5-aminolevulinate from L-glutamyl-tRNA(Glu): step 1/2. Functionally, catalyzes the NADPH-dependent reduction of glutamyl-tRNA(Glu) to glutamate 1-semialdehyde (GSA). This is Glutamyl-tRNA reductase from Saccharophagus degradans (strain 2-40 / ATCC 43961 / DSM 17024).